The primary structure comprises 1374 residues: L-2-aminoadipate reductase large subunit (1374 aa).

A Carrier domain is found at 828 to 905 (SEFNQQEREI…AFAAEVSRLK (78 aa)). Ser-865 is subject to O-(pantetheine 4'-phosphoryl)serine.

It belongs to the ATP-dependent AMP-binding enzyme family. As to quaternary structure, heterodimer of an alpha and a beta subunit. It depends on pantetheine 4'-phosphate as a cofactor.

It catalyses the reaction (S)-2-amino-6-oxohexanoate + NADP(+) + H2O = L-2-aminoadipate + NADPH + 2 H(+). The enzyme catalyses (S)-2-amino-6-oxohexanoate + NAD(+) + H2O = L-2-aminoadipate + NADH + 2 H(+). It carries out the reaction (S)-2-amino-6-oxohexanoate + AMP + diphosphate + NADP(+) = L-2-aminoadipate + ATP + NADPH + H(+). It participates in amino-acid biosynthesis; L-lysine biosynthesis via AAA pathway; L-lysine from L-alpha-aminoadipate (fungal route): step 1/3. Its function is as follows. Catalyzes the activation of alpha-aminoadipate by ATP-dependent adenylation and the reduction of activated alpha-aminoadipate by NADPH. The activated alpha-aminoadipate is bound to the phosphopantheinyl group of the enzyme itself before it is reduced to (S)-2-amino-6-oxohexanoate. The chain is L-2-aminoadipate reductase large subunit (LYS2) from Candida glabrata (strain ATCC 2001 / BCRC 20586 / JCM 3761 / NBRC 0622 / NRRL Y-65 / CBS 138) (Yeast).